Consider the following 620-residue polypeptide: Glutathione-regulated potassium-efflux system protein KefC (620 aa).

12 consecutive transmembrane segments (helical) span residues 4–24 (HTLI…PIAV), 26–46 (LGLG…PWGL), 54–74 (SILH…GLEL), 90–110 (GALQ…FLGL), 114–134 (VAEL…MQAM), 149–169 (FAVL…IPLL), 178–198 (MGAF…VVLL), 218–238 (VFSA…EEVG), 270–290 (GLLL…GTLL), 294–314 (LRIV…LWLI), 327–347 (WFAV…GAAQ), and 359–379 (SLTL…VILN). An RCK N-terminal domain is found at 399–518 (QPRVIIAGFG…AGVEKPERET (120 aa)). The segment at 597–620 (GWQGTEEGKHTGNMADEPETKPSS) is disordered.

The protein belongs to the monovalent cation:proton antiporter 2 (CPA2) transporter (TC 2.A.37) family. KefC subfamily. As to quaternary structure, homodimer. Interacts with the regulatory subunit KefF.

The protein localises to the cell inner membrane. Pore-forming subunit of a potassium efflux system that confers protection against electrophiles. Catalyzes K(+)/H(+) antiport. This chain is Glutathione-regulated potassium-efflux system protein KefC, found in Escherichia fergusonii (strain ATCC 35469 / DSM 13698 / CCUG 18766 / IAM 14443 / JCM 21226 / LMG 7866 / NBRC 102419 / NCTC 12128 / CDC 0568-73).